A 183-amino-acid chain; its full sequence is Protein P7 (183 aa).

The protein localises to the host nucleus. Functionally, may play a role in inhibition of the host immune system by counteracting the type I interferon response. The sequence is that of Protein P7 from Gadus morhua (Atlantic cod).